Reading from the N-terminus, the 1435-residue chain is Probable ATP-dependent DNA helicase HFM1 (1435 aa).

In terms of domain architecture, Helicase ATP-binding spans 290 to 478 (DDLLYTDRNF…WLSDGERPAV (189 aa)). An ATP-binding site is contributed by 303-310 (APTGSGKT). The DEAH box signature appears at 411–414 (DEVH). The Helicase C-terminal domain occupies 519–720 (SVIQMYSDQK…DVNIAVEWIR (202 aa)). Residues 777-1092 (PTEAGRLMAW…GLDIQQKLTV (316 aa)) form the SEC63 domain. The segment at 1109–1139 (KSETQISHSKHSDISTIAGPNKGTTASKKPG) is disordered. The C4-type zinc-finger motif lies at 1143 to 1158 (CNHLCKSKHTCGHDCC). Residues 1295–1315 (GFGNTLSSSTRGSKLPLQESK) are disordered. Over residues 1296-1306 (FGNTLSSSTRG) the composition is skewed to polar residues.

It belongs to the helicase family. SKI2 subfamily. Zn(2+) is required as a cofactor. In terms of tissue distribution, preferentially expressed in testis and ovary.

It carries out the reaction Couples ATP hydrolysis with the unwinding of duplex DNA by translocating in the 3'-5' direction.. The catalysed reaction is ATP + H2O = ADP + phosphate + H(+). Functionally, required for crossover formation and complete synapsis of homologous chromosomes during meiosis. The polypeptide is Probable ATP-dependent DNA helicase HFM1 (HFM1) (Homo sapiens (Human)).